A 260-amino-acid polypeptide reads, in one-letter code: Ribonuclease 3 (260 aa).

Residues 1 to 24 (MAQSSKYQRKPRSGERKRSQRRLE) are disordered. The span at 12–24 (RSGERKRSQRRLE) shows a compositional bias: basic and acidic residues. An RNase III domain is found at 33–162 (FDDLLVRTGL…FIGALYMDQG (130 aa)). Glu-75 serves as a coordination point for Mg(2+). Asp-79 is a catalytic residue. Residues Asp-148 and Glu-151 each contribute to the Mg(2+) site. Residue Glu-151 is part of the active site. In terms of domain architecture, DRBM spans 188-257 (DFKSQLQEFV…AKQALLALNQ (70 aa)).

Belongs to the ribonuclease III family. In terms of assembly, homodimer. It depends on Mg(2+) as a cofactor.

The protein resides in the cytoplasm. It catalyses the reaction Endonucleolytic cleavage to 5'-phosphomonoester.. In terms of biological role, digests double-stranded RNA. Involved in the processing of primary rRNA transcript to yield the immediate precursors to the large and small rRNAs (23S and 16S). Processes some mRNAs, and tRNAs when they are encoded in the rRNA operon. Processes pre-crRNA and tracrRNA of type II CRISPR loci if present in the organism. The chain is Ribonuclease 3 from Shouchella clausii (strain KSM-K16) (Alkalihalobacillus clausii).